A 146-amino-acid polypeptide reads, in one-letter code: Hemoglobin subunit beta (146 aa).

N-acetylvaline is present on V1. The 145-residue stretch at 2 to 146 (HLTADEKAAV…VATALAHKYH (145 aa)) folds into the Globin domain. S44 carries the post-translational modification Phosphoserine. The residue at position 59 (K59) is an N6-acetyllysine. H63 is a binding site for heme b. K82 carries the N6-acetyllysine modification. H92 provides a ligand contact to heme b. An S-nitrosocysteine modification is found at C93. K144 is subject to N6-acetyllysine.

It belongs to the globin family. As to quaternary structure, heterotetramer of two alpha chains and two beta chains. In terms of tissue distribution, red blood cells.

Functionally, involved in oxygen transport from the lung to the various peripheral tissues. This is Hemoglobin subunit beta (HBB) from Myotis velifer (Mouse-eared bat).